Reading from the N-terminus, the 161-residue chain is TRAF-interacting protein with FHA domain-containing protein B (161 aa).

Residues 36 to 91 (LLLGRGQDAHLQLQLPRLSRRHLSLEPYLEKGSALLAFCLKALSRKGCVWVNGLTL) enclose the FHA domain.

In terms of assembly, interacts with TIFA.

Functionally, inhibits TIFA-mediated TRAF6 activation possibly by inducing a conformational change in TIFA. In Homo sapiens (Human), this protein is TRAF-interacting protein with FHA domain-containing protein B.